The chain runs to 74 residues: Pelophylaxin-3 (74 aa).

An N-terminal signal peptide occupies residues 1–22; that stretch reads MFTLKKSLLLVFFLGTISLSLC. Residues 23 to 39 constitute a propeptide that is removed on maturation; it reads EDERNADEDDGEMTEEV. The cysteines at positions 68 and 74 are disulfide-linked.

Expressed by the skin glands.

It localises to the secreted. Functionally, antimicrobial peptide. The chain is Pelophylaxin-3 from Pelophylax fukienensis (Fukien gold-striped pond frog).